We begin with the raw amino-acid sequence, 495 residues long: Trigger factor (495 aa).

Positions 162-243 (DDFVSIDLSA…VKSLKERELP (82 aa)) constitute a PPIase FKBP-type domain. A compositionally biased stretch (basic and acidic residues) spans 425-437 (DTDGNEIDPKEYF). The disordered stretch occupies residues 425–495 (DTDGNEIDPK…TDDDSENAEK (71 aa)). A compositionally biased stretch (low complexity) spans 450–461 (SADAEASENSEA). Over residues 486–495 (TDDDSENAEK) the composition is skewed to acidic residues.

The protein belongs to the FKBP-type PPIase family. Tig subfamily.

The protein resides in the cytoplasm. It carries out the reaction [protein]-peptidylproline (omega=180) = [protein]-peptidylproline (omega=0). In terms of biological role, involved in protein export. Acts as a chaperone by maintaining the newly synthesized protein in an open conformation. Functions as a peptidyl-prolyl cis-trans isomerase. This Corynebacterium kroppenstedtii (strain DSM 44385 / JCM 11950 / CIP 105744 / CCUG 35717) protein is Trigger factor.